The sequence spans 328 residues: Methionyl-tRNA formyltransferase (328 aa).

Serine 121–proline 124 lines the (6S)-5,6,7,8-tetrahydrofolate pocket.

It belongs to the Fmt family.

It catalyses the reaction L-methionyl-tRNA(fMet) + (6R)-10-formyltetrahydrofolate = N-formyl-L-methionyl-tRNA(fMet) + (6S)-5,6,7,8-tetrahydrofolate + H(+). Its function is as follows. Attaches a formyl group to the free amino group of methionyl-tRNA(fMet). The formyl group appears to play a dual role in the initiator identity of N-formylmethionyl-tRNA by promoting its recognition by IF2 and preventing the misappropriation of this tRNA by the elongation apparatus. The chain is Methionyl-tRNA formyltransferase from Burkholderia thailandensis (strain ATCC 700388 / DSM 13276 / CCUG 48851 / CIP 106301 / E264).